The primary structure comprises 380 residues: Cystathionine gamma-synthase (380 aa).

Lys195 bears the N6-(pyridoxal phosphate)lysine mark.

The protein belongs to the trans-sulfuration enzymes family. In terms of assembly, homotetramer. Pyridoxal 5'-phosphate is required as a cofactor.

It is found in the cytoplasm. It catalyses the reaction O-succinyl-L-homoserine + L-cysteine = L,L-cystathionine + succinate + H(+). Its function is as follows. Catalyzes the formation of L-cystathionine from O-succinyl-L-homoserine (OSHS) and L-cysteine, via a gamma-replacement reaction. In the absence of thiol, catalyzes gamma-elimination to form 2-oxobutanoate, succinate and ammonia. This chain is Cystathionine gamma-synthase (metB), found in Helicobacter pylori (strain J99 / ATCC 700824) (Campylobacter pylori J99).